A 919-amino-acid chain; its full sequence is Phosphoenolpyruvate carboxylase (919 aa).

Residues histidine 138 and lysine 579 contribute to the active site.

Belongs to the PEPCase type 1 family. The cofactor is Mg(2+).

The catalysed reaction is oxaloacetate + phosphate = phosphoenolpyruvate + hydrogencarbonate. Its function is as follows. Forms oxaloacetate, a four-carbon dicarboxylic acid source for the tricarboxylic acid cycle. The sequence is that of Phosphoenolpyruvate carboxylase from Corynebacterium glutamicum (Brevibacterium saccharolyticum).